The chain runs to 228 residues: Urease accessory protein UreF 1 (228 aa).

It belongs to the UreF family. UreD, UreF and UreG form a complex that acts as a GTP-hydrolysis-dependent molecular chaperone, activating the urease apoprotein by helping to assemble the nickel containing metallocenter of UreC. The UreE protein probably delivers the nickel.

It localises to the cytoplasm. Required for maturation of urease via the functional incorporation of the urease nickel metallocenter. Its function is as follows. Disruption of the ure1 gene cluster suggests that it protects brucellae during their passage through the stomach. The major route of infection in human brucellosis is oral. In Brucella abortus (strain 2308), this protein is Urease accessory protein UreF 1.